An 807-amino-acid chain; its full sequence is Glycerol-3-phosphate acyltransferase (807 aa).

An HXXXXD motif motif is present at residues Cys-305–Met-310.

This sequence belongs to the GPAT/DAPAT family.

It localises to the cell inner membrane. The catalysed reaction is sn-glycerol 3-phosphate + an acyl-CoA = a 1-acyl-sn-glycero-3-phosphate + CoA. The protein operates within phospholipid metabolism; CDP-diacylglycerol biosynthesis; CDP-diacylglycerol from sn-glycerol 3-phosphate: step 1/3. In Escherichia coli O139:H28 (strain E24377A / ETEC), this protein is Glycerol-3-phosphate acyltransferase.